A 321-amino-acid polypeptide reads, in one-letter code: MSNALEELKKYTTVVADTADFDVLSKYGSQDSTTNPSLVFQAASDPKYKSLIDDAIKYVNAKSGLSEKEKLSLAIDKLFVNFGVEILKIVPGRVSTEVDARLSYDIDANVKKGRELIALYKEAGIDKERVLIKLASTWEGIEAAKILEKEGIHCNLTLLFSLIQAAACAEAQVTLISPFVGRITDFYKSKQGVAGFEASKDPGVISVQQIYSYFKKHGYKTSVMGASFRNKEQTIELAGCDLLTISPNLLEELKNADASLVTKKLDSTKLPSDIPNKLDVSHSNFLWELNDNEMAYFKTGEGIRKFAEDLVKLENQIKKLL.

The active-site Schiff-base intermediate with substrate is Lys133.

It belongs to the transaldolase family. Type 1 subfamily. In terms of assembly, homodimer.

It is found in the cytoplasm. The catalysed reaction is D-sedoheptulose 7-phosphate + D-glyceraldehyde 3-phosphate = D-erythrose 4-phosphate + beta-D-fructose 6-phosphate. The protein operates within carbohydrate degradation; pentose phosphate pathway; D-glyceraldehyde 3-phosphate and beta-D-fructose 6-phosphate from D-ribose 5-phosphate and D-xylulose 5-phosphate (non-oxidative stage): step 2/3. Its function is as follows. Transaldolase is important for the balance of metabolites in the pentose-phosphate pathway. This is Probable transaldolase (tal) from Dictyostelium discoideum (Social amoeba).